Consider the following 323-residue polypeptide: ATP synthase gamma chain (323 aa).

Belongs to the ATPase gamma chain family. F-type ATPases have 2 components, CF(1) - the catalytic core - and CF(0) - the membrane proton channel. CF(1) has five subunits: alpha(3), beta(3), gamma(1), delta(1), epsilon(1). CF(0) has three main subunits: a, b and c.

It localises to the cell inner membrane. Its function is as follows. Produces ATP from ADP in the presence of a proton gradient across the membrane. The gamma chain is believed to be important in regulating ATPase activity and the flow of protons through the CF(0) complex. The protein is ATP synthase gamma chain of Rickettsia africae (strain ESF-5).